A 483-amino-acid polypeptide reads, in one-letter code: Cobyric acid synthase (483 aa).

The GATase cobBQ-type domain occupies 248–435 (VLKVVVPVLP…LHGLFETAAA (188 aa)). Cys329 (nucleophile) is an active-site residue. The active site involves His427.

This sequence belongs to the CobB/CobQ family. CobQ subfamily.

The protein operates within cofactor biosynthesis; adenosylcobalamin biosynthesis. Its function is as follows. Catalyzes amidations at positions B, D, E, and G on adenosylcobyrinic A,C-diamide. NH(2) groups are provided by glutamine, and one molecule of ATP is hydrogenolyzed for each amidation. The polypeptide is Cobyric acid synthase (Pseudomonas fluorescens (strain SBW25)).